The following is a 759-amino-acid chain: Protein MTSS 1 (759 aa).

An IMD domain is found at 1–254 (MEAVIEKECS…EQVILDLKGS (254 aa)). Residues 108–157 (LQEQMEEWKKVANQLDKDHAKEYKKARQEIKNKSSDTLKLQKKAKKVDAQ) adopt a coiled-coil conformation. A disordered region spans residues 259 to 309 (SYQTPPSSPSTTMSRKSSVCSSLNSVNSSDSRSSGSHSHSPSSHYRYRSSN). At threonine 262 the chain carries Phosphothreonine. A phosphoserine mark is found at serine 265, serine 266, serine 275, and serine 326. The tract at residues 331–354 (QDAFQSKSPSPMPPEAANQLSNGF) is disordered. Threonine 429 carries the phosphothreonine modification. Disordered stretches follow at residues 431-472 (QRRK…AATR) and 569-759 (KRPA…PRFS). Threonine 607 carries the phosphothreonine modification. Positions 612 to 627 (PIPIKTPVIPVKTPTV) are enriched in low complexity. Phosphoserine is present on residues serine 648 and serine 651. Residues 660 to 670 (GVSNIPSSLWS) show a composition bias toward polar residues. Pro residues predominate over residues 675-685 (VNPPLPGPKPS). The WH2 domain maps to 731-748 (QGEDMLNAIRRGVKLKKT).

This sequence belongs to the MTSS family. As to quaternary structure, binds to actin. As to expression, strongly expressed in the developing neurons and skeletal and cardiac muscles in embryos. Strongly expressed also in liver, outer layers of the kidney, and in the Purkinje cells of the brain.

It localises to the cytoplasm. Its subcellular location is the cytoskeleton. Functionally, inhibits the nucleation of actin filaments in vitro. In Mus musculus (Mouse), this protein is Protein MTSS 1.